A 205-amino-acid polypeptide reads, in one-letter code: Outer-membrane lipoprotein carrier protein (205 aa).

Residues 1–22 (MKKIVIVISILLTSFLSSAVSA) form the signal peptide.

The protein belongs to the LolA family. Monomer.

Its subcellular location is the periplasm. Functionally, participates in the translocation of lipoproteins from the inner membrane to the outer membrane. Only forms a complex with a lipoprotein if the residue after the N-terminal Cys is not an aspartate (The Asp acts as a targeting signal to indicate that the lipoprotein should stay in the inner membrane). The sequence is that of Outer-membrane lipoprotein carrier protein from Psychromonas ingrahamii (strain DSM 17664 / CCUG 51855 / 37).